A 97-amino-acid chain; its full sequence is Small integral membrane protein 8 (97 aa).

Residues methionine 1–glycine 24 are disordered. Residues threonine 9–phenylalanine 20 are compositionally biased toward basic and acidic residues. Residues proline 48–isoleucine 70 traverse the membrane as a helical segment.

The protein belongs to the SMIM8 family.

The protein resides in the membrane. This Homo sapiens (Human) protein is Small integral membrane protein 8 (SMIM8).